We begin with the raw amino-acid sequence, 80 residues long: N-V protease (80 aa).

The protein belongs to the peptidase S8 family. In terms of assembly, monomer. As to expression, body cavity.

Its subcellular location is the secreted. With respect to regulation, inhibited by the serine protease inhibitors DFP, PMSF and TLCK. Not inhibited by the serine protease inhibitors aprotinin, elastinal, SBTI and benzamidine, the cysteine protease inhibitors iodoacetate and E64, or the metalloprotease inhibitors EDTA and EGTA. Serine protease. Hydrolyzes the alpha chains of fibrin and fibrinogen completely, has lower activity on the beta and gamma chains of fibrin and fibrinogen. The chain is N-V protease from Alitta virens (Sandworm).